The chain runs to 452 residues: Eukaryotic translation initiation factor 3 subunit E (452 aa).

A PCI domain is found at 257–426 (TDLFFSPAYI…GTVIMNHPPQ (170 aa)).

This sequence belongs to the eIF-3 subunit E family. Component of the eukaryotic translation initiation factor 3 (eIF-3) complex.

The protein resides in the cytoplasm. Functionally, component of the eukaryotic translation initiation factor 3 (eIF-3) complex, which is involved in protein synthesis of a specialized repertoire of mRNAs and, together with other initiation factors, stimulates binding of mRNA and methionyl-tRNAi to the 40S ribosome. The eIF-3 complex specifically targets and initiates translation of a subset of mRNAs involved in cell proliferation. This chain is Eukaryotic translation initiation factor 3 subunit E (int6), found in Aspergillus niger (strain ATCC MYA-4892 / CBS 513.88 / FGSC A1513).